The chain runs to 137 residues: 6,7-dimethyl-8-ribityllumazine synthase (137 aa).

5-amino-6-(D-ribitylamino)uracil-binding positions include Phe-11, 43 to 45 (SFD), and 67 to 69 (CVI). 72 to 73 (DT) provides a ligand contact to (2S)-2-hydroxy-3-oxobutyl phosphate. His-75 acts as the Proton donor in catalysis. Leu-100 contributes to the 5-amino-6-(D-ribitylamino)uracil binding site. Arg-115 contacts (2S)-2-hydroxy-3-oxobutyl phosphate.

Belongs to the DMRL synthase family. In terms of assembly, forms an icosahedral capsid composed of 60 subunits, arranged as a dodecamer of pentamers.

The enzyme catalyses (2S)-2-hydroxy-3-oxobutyl phosphate + 5-amino-6-(D-ribitylamino)uracil = 6,7-dimethyl-8-(1-D-ribityl)lumazine + phosphate + 2 H2O + H(+). Its pathway is cofactor biosynthesis; riboflavin biosynthesis; riboflavin from 2-hydroxy-3-oxobutyl phosphate and 5-amino-6-(D-ribitylamino)uracil: step 1/2. Its function is as follows. Catalyzes the formation of 6,7-dimethyl-8-ribityllumazine by condensation of 5-amino-6-(D-ribitylamino)uracil with 3,4-dihydroxy-2-butanone 4-phosphate. This is the penultimate step in the biosynthesis of riboflavin. This is 6,7-dimethyl-8-ribityllumazine synthase from Methanococcus maripaludis (strain C5 / ATCC BAA-1333).